The sequence spans 83 residues: Cytochrome b559 subunit alpha (83 aa).

A helical transmembrane segment spans residues 21–35 (VIHSITIPSLFIAGW). Residue histidine 23 participates in heme binding.

It belongs to the PsbE/PsbF family. Heterodimer of an alpha subunit and a beta subunit. PSII is composed of 1 copy each of membrane proteins PsbA, PsbB, PsbC, PsbD, PsbE, PsbF, PsbH, PsbI, PsbJ, PsbK, PsbL, PsbM, PsbT, PsbX, PsbY, PsbZ, Psb30/Ycf12, at least 3 peripheral proteins of the oxygen-evolving complex and a large number of cofactors. It forms dimeric complexes. Heme b serves as cofactor.

It is found in the plastid. It localises to the chloroplast thylakoid membrane. Its function is as follows. This b-type cytochrome is tightly associated with the reaction center of photosystem II (PSII). PSII is a light-driven water:plastoquinone oxidoreductase that uses light energy to abstract electrons from H(2)O, generating O(2) and a proton gradient subsequently used for ATP formation. It consists of a core antenna complex that captures photons, and an electron transfer chain that converts photonic excitation into a charge separation. This is Cytochrome b559 subunit alpha from Anthoceros angustus (Hornwort).